The primary structure comprises 701 residues: ER-retained PMA1-suppressing protein 1 (701 aa).

A signal peptide spans 1–27 (MKMNLKRLVVTFFSCITFLLKFTIAAA). The Thioredoxin 1 domain occupies 28–142 (EPPEGFPEPL…LIAFARRESM (115 aa)). A disulfide bond links cysteine 60 and cysteine 63. Residue asparagine 85 is glycosylated (N-linked (GlcNAc...) asparagine). Residues cysteine 200 and cysteine 203 are joined by a disulfide bond. Residues asparagine 264, asparagine 299, and asparagine 370 are each glycosylated (N-linked (GlcNAc...) asparagine). The Thioredoxin 2 domain occupies 408-446 (PTFFMFKDGDPISYVFPGYSTTEMRNIDAIMDWVKKYSN). A helical membrane pass occupies residues 646-666 (IIHGNGMPGYLIVIVLFIAIL).

This sequence belongs to the protein disulfide isomerase family. As to quaternary structure, interacts with mutated PMA1-D378N but not wild type PMA1. Interacts with EUG1, KAR2, MPD1 and PDI1.

The protein localises to the endoplasmic reticulum membrane. It carries out the reaction Catalyzes the rearrangement of -S-S- bonds in proteins.. Functionally, acts as a membrane-bound chaperone in endoplasmic reticulum quality control. Probably facilitates presentation of substrate to membrane-bound components of the degradation machinery. The protein is ER-retained PMA1-suppressing protein 1 (EPS1) of Saccharomyces cerevisiae (strain ATCC 204508 / S288c) (Baker's yeast).